Consider the following 109-residue polypeptide: UPF0060 membrane protein PA14_21660 (109 aa).

The next 4 helical transmembrane spans lie at 5–25, 27–47, 59–79, and 84–104; these read LWFV…YLWL, LGKS…FALL, AYAA…AFVE, and LWSD…VLFG.

It belongs to the UPF0060 family.

It localises to the cell inner membrane. This Pseudomonas aeruginosa (strain UCBPP-PA14) protein is UPF0060 membrane protein PA14_21660.